Consider the following 367-residue polypeptide: DNA replication and repair protein RecF (367 aa).

30–37 provides a ligand contact to ATP; that stretch reads GANGSGKT.

This sequence belongs to the RecF family.

The protein resides in the cytoplasm. In terms of biological role, the RecF protein is involved in DNA metabolism; it is required for DNA replication and normal SOS inducibility. RecF binds preferentially to single-stranded, linear DNA. It also seems to bind ATP. The chain is DNA replication and repair protein RecF from Pseudomonas savastanoi pv. phaseolicola (strain 1448A / Race 6) (Pseudomonas syringae pv. phaseolicola (strain 1448A / Race 6)).